The following is a 497-amino-acid chain: Long chain base biosynthesis protein 2c (497 aa).

The helical transmembrane segment at 4–24 (VPFVTAVTTVFSYGVIFGFGH) threads the bilayer. Lys319 is modified (N6-(pyridoxal phosphate)lysine).

It belongs to the class-II pyridoxal-phosphate-dependent aminotransferase family. Heterodimer with LCB1. Component of the serine palmitoyltransferase (SPT) complex, composed of LCB1 and LCB2. Requires pyridoxal 5'-phosphate as cofactor.

The protein localises to the endoplasmic reticulum membrane. It catalyses the reaction L-serine + hexadecanoyl-CoA + H(+) = 3-oxosphinganine + CO2 + CoA. The protein operates within lipid metabolism; sphingolipid metabolism. Serine palmitoyltransferase (SPT). The heterodimer formed with LCB1 constitutes the catalytic core. This chain is Long chain base biosynthesis protein 2c, found in Oryza sativa subsp. japonica (Rice).